The primary structure comprises 734 residues: E3 ubiquitin-protein ligase TRIM56 (734 aa).

The segment at 21–60 (CKICLEQLHTPKTLPCLHTYCQDCLAQLDIGGQVRCPECR) adopts an RING-type zinc-finger fold. 2 consecutive B box-type zinc fingers follow at residues 98–149 (KPTC…VVDL) and 164–205 (RQAS…CLPL). Residues Cys-169, His-172, Cys-192, and His-197 each contribute to the Zn(2+) site. Residues 215–303 (GLEELLAGVD…KIERQEQVAK (89 aa)) are a coiled coil. Positions 372-381 (EPKQSPKDSG) are enriched in basic and acidic residues. Residues 372–463 (EPKQSPKDSG…SPILRPNLEG (92 aa)) are disordered. Over residues 435–448 (RPNKKKKCKGRGKS) the composition is skewed to basic residues. A Phosphoserine modification is found at Ser-454.

Belongs to the TRIM/RBCC family. In terms of assembly, interacts with STING1. Interacts with TICAM1.

It localises to the cytoplasm. It carries out the reaction S-ubiquitinyl-[E2 ubiquitin-conjugating enzyme]-L-cysteine + [acceptor protein]-L-lysine = [E2 ubiquitin-conjugating enzyme]-L-cysteine + N(6)-ubiquitinyl-[acceptor protein]-L-lysine.. The protein operates within protein modification; protein ubiquitination. In terms of biological role, E3 ubiquitin-protein ligase that plays a key role in innate antiviral immunity by mediating ubiquitination of CGAS and STING1. In response to pathogen- and host-derived double-stranded DNA (dsDNA), targets STING1 to 'Lys-63'-linked ubiquitination, thereby promoting its homodimerization, a step required for the production of type I interferon IFN-beta. Also mediates monoubiquitination of CGAS, thereby promoting CGAS oligomerization and subsequent activation. Independently of its E3 ubiquitin ligase activity, positive regulator of TLR3 signaling. Potentiates extracellular double stranded RNA (dsRNA)-induced expression of IFNB1 and interferon-stimulated genes ISG15, IFIT1/ISG56, CXCL10, OASL and CCL5/RANTES. The chain is E3 ubiquitin-protein ligase TRIM56 from Mus musculus (Mouse).